A 111-amino-acid polypeptide reads, in one-letter code: Large ribosomal subunit protein P1 (111 aa).

The segment at 75-111 is disordered; sequence AAAPAAEEKAEEEKKEEEEEKKEEEVDLSGLSGMFGF. The segment covering 88–101 has biased composition (acidic residues); it reads KKEEEEEKKEEEVD.

This sequence belongs to the eukaryotic ribosomal protein P1/P2 family. As to quaternary structure, part of the 50S ribosomal subunit. Homodimer, it forms part of the ribosomal stalk which helps the ribosome interact with GTP-bound translation factors. Forms a heptameric uL10/P0(P1)2(P1)2(P1)2 complex, where uL10/P0 forms an elongated spine to which the P1 dimers bind in a sequential fashion.

In terms of biological role, forms part of the ribosomal stalk, playing a central role in the interaction of the ribosome with GTP-bound translation factors. The sequence is that of Large ribosomal subunit protein P1 from Aeropyrum pernix (strain ATCC 700893 / DSM 11879 / JCM 9820 / NBRC 100138 / K1).